Reading from the N-terminus, the 736-residue chain is Gephyrin (736 aa).

Residues 14–166 are MPT Mo-transferase; that stretch reads QIRVGVLTVS…FILPALPHAI (153 aa). The interaction with GABARAP stretch occupies residues 140–316; sequence LIINLPGSKK…VDITKVARRH (177 aa). Disordered stretches follow at residues 181–232 and 260–290; these read DELE…DSSS and TASL…PKVQ. A compositionally biased stretch (pro residues) spans 187 to 199; it reads PSPPPPLSPPPTT. S188 and S194 each carry phosphoserine. Residue T198 is modified to Phosphothreonine. S200 bears the Phosphoserine mark. Residue C212 is the site of S-palmitoyl cysteine attachment. The segment covering 261–290 has biased composition (polar residues); sequence ASLSTTPSESPRAQATSRLSTASCPTPKVQ. Residue S262 is modified to Phosphoserine. Phosphothreonine occurs at positions 265 and 266. Phosphoserine occurs at positions 268 and 270. The S-palmitoyl cysteine moiety is linked to residue C284. Phosphoserine is present on S305. An MPT adenylyltransferase region spans residues 326 to 736; that stretch reads MDKAFITVLE…VVDVMVIGRL (411 aa).

In the N-terminal section; belongs to the MoaB/Mog family. It in the C-terminal section; belongs to the MoeA family. As to quaternary structure, homotrimer, homodimer and homooligomer. Interacts with GABARAP. Interacts with SRGAP2 (via SH3 domain). Interacts with GABRA3. Interacts with GLRB. GABRA3 and GLRB occupy overlapping binding sites. Interacts with ARHGAP32; IQSEC3, INSYN1 and INSYN2A. The cofactor is Mg(2+). Palmitoylated. Palmitoylation is stimulated by GABA type A receptors activity. Palmitoylation by ZDHHC12 regulates clustering at synapses.

The protein localises to the postsynaptic cell membrane. It is found in the cell membrane. The protein resides in the cytoplasm. Its subcellular location is the cytosol. It localises to the cytoskeleton. The protein localises to the cell projection. It is found in the dendrite. The protein resides in the postsynaptic density. It catalyses the reaction molybdopterin + ATP + H(+) = adenylyl-molybdopterin + diphosphate. The catalysed reaction is adenylyl-molybdopterin + molybdate = Mo-molybdopterin + AMP + H(+). Its pathway is cofactor biosynthesis; molybdopterin biosynthesis. With respect to regulation, inhibited by copper and tungsten. Microtubule-associated protein involved in membrane protein-cytoskeleton interactions. It is thought to anchor the inhibitory glycine receptor (GLYR) to subsynaptic microtubules. Acts as a major instructive molecule at inhibitory synapses, where it also clusters GABA type A receptors. Functionally, also has a catalytic activity and catalyzes two steps in the biosynthesis of the molybdenum cofactor. In the first step, molybdopterin is adenylated. Subsequently, molybdate is inserted into adenylated molybdopterin and AMP is released. The sequence is that of Gephyrin from Homo sapiens (Human).